The chain runs to 94 residues: Large ribosomal subunit protein eL42 (94 aa).

The Zn(2+) site is built by Cys-11, Cys-14, Cys-71, and Cys-74. The segment at 11–74 (CPFCKKHTIH…LDLRFRCTEC (64 aa)) adopts a C4-type zinc-finger fold.

This sequence belongs to the eukaryotic ribosomal protein eL42 family. Part of the 50S ribosomal subunit. Requires Zn(2+) as cofactor.

In terms of biological role, binds to the 23S rRNA. In Pyrococcus furiosus (strain ATCC 43587 / DSM 3638 / JCM 8422 / Vc1), this protein is Large ribosomal subunit protein eL42.